Consider the following 710-residue polypeptide: Bifunctional sesterterpene synthase (710 aa).

The interval 1 to 327 (MEFKFSAVVD…RYYTDASFSE (327 aa)) is stellata-2,6,19-trien synthase. Residues aspartate 92 and aspartate 96 each contribute to the Mg(2+) site. Residues aspartate 92, aspartate 96, 181-184 (RVHD), and 229-233 (SWDKE) contribute to the substrate site. The short motif at 92–96 (DDVTD) is the DDXXD motif 1 element. An NSE motif motif is present at residues 278 to 286 (YLRVFEEVK). 318-319 (RY) is a substrate binding site. The segment at 328–709 (RQLEWMKNGI…LRLIFELLRN (382 aa)) is geranylgeranyl diphosphate synthase. The disordered stretch occupies residues 365–404 (HHAVTSNGTGTGSHDTLNGDGTAHENNSRDASIPGRTTNG). Residues 368–380 (VTSNGTGTGSHDT) are compositionally biased toward polar residues. Isopentenyl diphosphate is bound by residues lysine 430, arginine 433, and histidine 462. Mg(2+) contacts are provided by aspartate 469 and aspartate 473. A DDXXD motif 2 motif is present at residues 469–473 (DDLED). Arginine 478 contributes to the dimethylallyl diphosphate binding site. Arginine 479 contacts isopentenyl diphosphate. Positions 556, 557, 592, 599, 609, and 619 each coordinate dimethylallyl diphosphate.

It in the C-terminal section; belongs to the FPP/GGPP synthase family. This sequence in the N-terminal section; belongs to the terpene synthase family. Hexamer.

It catalyses the reaction 4 isopentenyl diphosphate + dimethylallyl diphosphate = (2E,6E,10E,14E)-geranylfarnesyl diphosphate + 4 diphosphate. The catalysed reaction is (2E,6E,10E,14E)-geranylfarnesyl diphosphate = variecoladiene + diphosphate. It participates in secondary metabolite biosynthesis; terpenoid biosynthesis. Multifunctional sesterterpene synthase; part of the gene cluster that mediates the biosynthesis of the sesterterpene variecolin. The first step in the pathway is performed by the variecoladiene synthase vrcA that possesses both prenyl transferase and terpene cyclase activity, converting isopentenyl diphosphate and dimethylallyl diphosphate into geranylfarnesyl pyrophosphate (GFPP) and then converting GFPP into the tetracyclic variecoladiene. The cytochrome P450 monooxygenase vrcB then catalyzes multiple oxidations at C-5 and C-20 positions to yield variecolin. The polypeptide is Bifunctional sesterterpene synthase (Aspergillus aculeatus (strain ATCC 16872 / CBS 172.66 / WB 5094)).